We begin with the raw amino-acid sequence, 113 residues long: Large ribosomal subunit protein bL17 (113 aa).

The protein belongs to the bacterial ribosomal protein bL17 family. In terms of assembly, part of the 50S ribosomal subunit. Contacts protein L32.

The polypeptide is Large ribosomal subunit protein bL17 (Caldicellulosiruptor saccharolyticus (strain ATCC 43494 / DSM 8903 / Tp8T 6331)).